The primary structure comprises 214 residues: Adenylate kinase (214 aa).

Position 10 to 15 (10 to 15 (GAGKGT)) interacts with ATP. The NMP stretch occupies residues 30–59 (STGDMLRAAIKAGTELGLKAKAVMDAGQLV). AMP is bound by residues Thr31, Arg36, 57 to 59 (QLV), 85 to 88 (GFPR), and Gln92. The LID stretch occupies residues 122–159 (GRRVHSGSGRTYHVVFNPPKVEGKDDVTGEDLVIRADD). ATP-binding positions include Arg123 and 132 to 133 (TY). AMP-binding residues include Arg156 and Arg167. Gln200 provides a ligand contact to ATP.

This sequence belongs to the adenylate kinase family. In terms of assembly, monomer.

Its subcellular location is the cytoplasm. It carries out the reaction AMP + ATP = 2 ADP. Its pathway is purine metabolism; AMP biosynthesis via salvage pathway; AMP from ADP: step 1/1. Catalyzes the reversible transfer of the terminal phosphate group between ATP and AMP. Plays an important role in cellular energy homeostasis and in adenine nucleotide metabolism. This chain is Adenylate kinase, found in Aeromonas hydrophila subsp. hydrophila (strain ATCC 7966 / DSM 30187 / BCRC 13018 / CCUG 14551 / JCM 1027 / KCTC 2358 / NCIMB 9240 / NCTC 8049).